Here is a 385-residue protein sequence, read N- to C-terminus: Probable thioesterase PNKD (385 aa).

The span at 31 to 42 (NKASQNRSRALQ) shows a compositional bias: polar residues. The tract at residues 31-57 (NKASQNRSRALQSHSSPECKEEPEPLS) is disordered. Residues His-172, His-174, Asp-176, His-177, His-229, Asp-253, and His-291 each contribute to the Zn(2+) site.

The protein belongs to the metallo-beta-lactamase superfamily. Glyoxalase II family. Requires Zn(2+) as cofactor. In terms of processing, undergoes cleavage at the N-terminus.

The protein localises to the cell membrane. It localises to the mitochondrion. The enzyme catalyses a thioester + H2O = a thiol + a carboxylate + H(+). Its function is as follows. Probable thioesterase that may play a role in cellular detoxification processes; it likely acts on a yet-unknown alpha-hydroxythioester substrate. In vitro, it is able to catalyze the hydrolysis of S-D-lactoyl-glutathione to form glutathione and D-lactic acid at very low rate, though this reaction is not physiologically relevant in vivo. This is Probable thioesterase PNKD (PNKD) from Bos taurus (Bovine).